The primary structure comprises 301 residues: MNIVVGTRGSNLALIQTEWVINELKKKYPEISFEIKIIKTKGDLIQNVSLDKIGDKGLFVKEIEQQLLDGKIDIAVHSMKDMPSYLANGLKFAHTPKREDPRDVLILREGYKNLDDLPHGAVIGTGSKRRKFQLLKQRPDLNIVQVRGNVETRIRKIKDENMHGIVLAASGIIRANLQDKISSYLPVDVVIPAPAQGALAIEIRSNDSAIEGIVNSLKDENTEIQILAERGFLDGVNGSCHIPMAAYCEIIQDKIHLTGLYGDSEGKKVVIKSIDGDISSPRELGLKLAKLVLKEYENYEG.

At C240 the chain carries S-(dipyrrolylmethanemethyl)cysteine.

It belongs to the HMBS family. Monomer. Dipyrromethane is required as a cofactor.

It catalyses the reaction 4 porphobilinogen + H2O = hydroxymethylbilane + 4 NH4(+). Its pathway is porphyrin-containing compound metabolism; protoporphyrin-IX biosynthesis; coproporphyrinogen-III from 5-aminolevulinate: step 2/4. Its function is as follows. Tetrapolymerization of the monopyrrole PBG into the hydroxymethylbilane pre-uroporphyrinogen in several discrete steps. The chain is Porphobilinogen deaminase from Clostridioides difficile (strain 630) (Peptoclostridium difficile).